Reading from the N-terminus, the 442-residue chain is Envelope glycoprotein D (442 aa).

Positions 1-19 (MPAVLLVLYVNPPPSVCIL) are cleaved as a signal peptide. Over 20–405 (TQKLSLGLYN…NSTFVGISVG (386 aa)) the chain is Virion surface. N-linked (GlcNAc...) asparagine; by host glycosylation is found at Asn-103 and Asn-111. Cystine bridges form between Cys-138-Cys-259, Cys-176-Cys-273, and Cys-188-Cys-197. The disordered stretch occupies residues 331 to 364 (PDNHPGFDSVESEITQNKTDPKPGQADPKPNQPF). Residues Asn-347 and Asn-396 are each glycosylated (N-linked (GlcNAc...) asparagine; by host). A helical transmembrane segment spans residues 406–422 (LGIAGLVLVGVILYVCL). Residues 423 to 442 (RRKKELKVCTERLDSPTLDL) lie on the Intravirion side of the membrane.

It belongs to the herpesviridae glycoprotein D family.

It is found in the virion membrane. Its function is as follows. Envelope glycoprotein that binds to host cell entry receptors, promoting the virus entry into host cells. May trigger fusion with host membrane, by recruiting the fusion machinery composed of gB and gH/gL. The polypeptide is Envelope glycoprotein D (gD) (Equine herpesvirus 1 (strain Kentucky A) (EHV-1)).